Reading from the N-terminus, the 370-residue chain is MESLFPAPFWEVLYGSPLQGNLSLLSPNHSLLPPHLLLNASHGAFLPLGLKVTIVGLYLAVCVGGLLGNCLVMYVILRHTKMKTATNIYIFNLALADTAVLLTLPFQGTDVLLGFWPFGNALCKAVIAIDYYNMFTSAFTLTAMSVDRYVAICHPIRALDVRTSSKAQAVNVAIWALASIVGVPVAIMGSAQVEDEEIECLVEIPAPQDYWGPVFAVCIFLFSFVIPVLIISVCYSLMVRRLRGVRLLSGSREKDRNLRRITRLVLVVVAVFVGCWTPVQVFVLVQGLGVQPGSETAVAVLRFCTALGYVNSCLNPILYAFLDENFKACFRKFCCAPTRRREMQVSDRVRSIAKDVALACKTSETVPRPA.

The Extracellular segment spans residues 1 to 48 (MESLFPAPFWEVLYGSPLQGNLSLLSPNHSLLPPHLLLNASHGAFLPL). N-linked (GlcNAc...) asparagine glycosylation is found at N21, N28, and N39. Residues 49-74 (GLKVTIVGLYLAVCVGGLLGNCLVMY) form a helical membrane-spanning segment. Residues 75–87 (VILRHTKMKTATN) are Cytoplasmic-facing. The chain crosses the membrane as a helical span at residues 88–109 (IYIFNLALADTAVLLTLPFQGT). Residues 110–124 (DVLLGFWPFGNALCK) lie on the Extracellular side of the membrane. C123 and C200 are joined by a disulfide. A helical membrane pass occupies residues 125 to 146 (AVIAIDYYNMFTSAFTLTAMSV). The Cytoplasmic segment spans residues 147-165 (DRYVAICHPIRALDVRTSS). The chain crosses the membrane as a helical span at residues 166 to 188 (KAQAVNVAIWALASIVGVPVAIM). Topologically, residues 189–211 (GSAQVEDEEIECLVEIPAPQDYW) are extracellular. Residues 212–236 (GPVFAVCIFLFSFVIPVLIISVCYS) form a helical membrane-spanning segment. The Cytoplasmic segment spans residues 237-264 (LMVRRLRGVRLLSGSREKDRNLRRITRL). A helical transmembrane segment spans residues 265–285 (VLVVVAVFVGCWTPVQVFVLV). The Extracellular portion of the chain corresponds to 286–300 (QGLGVQPGSETAVAV). The helical transmembrane segment at 301–322 (LRFCTALGYVNSCLNPILYAFL) threads the bilayer. Residues 323 to 370 (DENFKACFRKFCCAPTRRREMQVSDRVRSIAKDVALACKTSETVPRPA) lie on the Cytoplasmic side of the membrane. The S-palmitoyl cysteine moiety is linked to residue C334.

This sequence belongs to the G-protein coupled receptor 1 family. Post-translationally, phosphorylation at Ser-363 requires GRK3. Detected in brain cortex, stomach, ileum, jejunum and colon.

It is found in the cell membrane. It localises to the cytoplasmic vesicle. Functionally, G-protein coupled opioid receptor that functions as a receptor for the endogenous neuropeptide nociceptin. Ligand binding causes a conformation change that triggers signaling via guanine nucleotide-binding proteins (G proteins) and modulates the activity of down-stream effectors. Signaling via G proteins mediates inhibition of adenylate cyclase activity and calcium channel activity. Arrestins modulate signaling via G proteins and mediate the activation of alternative signaling pathways that lead to the activation of MAP kinases. Plays a role in modulating nociception and the perception of pain. Plays a role in the regulation of locomotor activity by the neuropeptide nociceptin. This Sus scrofa (Pig) protein is Nociceptin receptor (OPRL1).